The following is a 142-amino-acid chain: DNA-directed RNA polymerases I and III subunit RPAC2 (142 aa).

A compositionally biased stretch (basic and acidic residues) spans methionine 1–alanine 11. The segment at methionine 1 to glutamate 45 is disordered. Phosphothreonine occurs at positions 15 and 33. The span at glutamate 24 to proline 42 shows a compositional bias: acidic residues. A Glycyl lysine isopeptide (Lys-Gly) (interchain with G-Cter in ubiquitin) cross-link involves residue lysine 134.

The protein belongs to the archaeal Rpo11/eukaryotic RPB11/RPC19 RNA polymerase subunit family. In terms of assembly, component of the RNA polymerase I (Pol I) and RNA polymerase III (Pol III) complexes. Component of the RNA polymerase I (Pol I) complex consisting of 14 subunits: RPA135, RPA190, RPC40, RPA14, RPB5, RPO26, RPA43, RPB8, RPA12, RPB10, RPC19, RPC10, RPA49 and RPA34. The complex is composed of a horseshoe-shaped core containing ten subunits (RPA135, RPA190, RPB5, RPO26, RPB8, RPB10, RPC10, RPA12, RPC19 and RPC40) where RPA135 and RPA190 form the DNA-binding cleft. Outside of the core, RPA14 and RPA43 form the stalk that mediates interactions with transcription initiation factors and newly synthesized RNA. Component of the RNA polymerase III (Pol III) complex consisting of 17 subunits. Directly interacts with the RPC40 subunit.

It is found in the nucleus. Its subcellular location is the nucleolus. In terms of biological role, DNA-dependent RNA polymerases catalyze the transcription of DNA into RNA using the four ribonucleoside triphosphates as substrates. Common core component of RNA polymerases I and III which synthesize ribosomal RNA precursors and small RNAs, such as 5S rRNA and tRNAs, respectively. The sequence is that of DNA-directed RNA polymerases I and III subunit RPAC2 (RPC19) from Saccharomyces cerevisiae (strain ATCC 204508 / S288c) (Baker's yeast).